A 576-amino-acid chain; its full sequence is Aspartate--tRNA ligase (576 aa).

E173 provides a ligand contact to L-aspartate. The segment at 197 to 200 (QLFK) is aspartate. Position 219 (R219) interacts with L-aspartate. ATP-binding positions include 219-221 (RDE) and Q228. L-aspartate is bound at residue H438. E470 provides a ligand contact to ATP. R477 serves as a coordination point for L-aspartate. 522 to 525 (GLDR) lines the ATP pocket.

This sequence belongs to the class-II aminoacyl-tRNA synthetase family. Type 1 subfamily. Homodimer.

It is found in the cytoplasm. The catalysed reaction is tRNA(Asp) + L-aspartate + ATP = L-aspartyl-tRNA(Asp) + AMP + diphosphate. In terms of biological role, catalyzes the attachment of L-aspartate to tRNA(Asp) in a two-step reaction: L-aspartate is first activated by ATP to form Asp-AMP and then transferred to the acceptor end of tRNA(Asp). The chain is Aspartate--tRNA ligase from Aster yellows witches'-broom phytoplasma (strain AYWB).